Consider the following 161-residue polypeptide: Nucleotide-binding protein Gbem_0619 (161 aa).

Belongs to the YajQ family.

Functionally, nucleotide-binding protein. The chain is Nucleotide-binding protein Gbem_0619 from Citrifermentans bemidjiense (strain ATCC BAA-1014 / DSM 16622 / JCM 12645 / Bem) (Geobacter bemidjiensis).